The following is a 240-amino-acid chain: Octanoyltransferase (240 aa).

A disordered region spans residues 1–22; sequence MGTTGTNDGATTPPANTSTPAV. Residues 10 to 21 show a composition bias toward low complexity; the sequence is ATTPPANTSTPA. The BPL/LPL catalytic domain occupies 51-236; the sequence is EKIPDTILLL…NLVDALNGDL (186 aa). Residues 89-96, 166-168, and 179-181 contribute to the substrate site; these read RGGRITWH, AIG, and GVA. The active-site Acyl-thioester intermediate is cysteine 197.

Belongs to the LipB family.

The protein localises to the cytoplasm. The enzyme catalyses octanoyl-[ACP] + L-lysyl-[protein] = N(6)-octanoyl-L-lysyl-[protein] + holo-[ACP] + H(+). It participates in protein modification; protein lipoylation via endogenous pathway; protein N(6)-(lipoyl)lysine from octanoyl-[acyl-carrier-protein]: step 1/2. Catalyzes the transfer of endogenously produced octanoic acid from octanoyl-acyl-carrier-protein onto the lipoyl domains of lipoate-dependent enzymes. Lipoyl-ACP can also act as a substrate although octanoyl-ACP is likely to be the physiological substrate. This is Octanoyltransferase from Corynebacterium jeikeium (strain K411).